A 138-amino-acid chain; its full sequence is Transposon Tn10 TetD protein (138 aa).

Positions 31–129 (KDVLLWIEHN…KVTPSYYRRN (99 aa)) constitute an HTH araC/xylS-type domain. 2 consecutive DNA-binding regions (H-T-H motif) follow at residues 48-69 (DDVANKAGYTKWYFQRLFKKVT) and 96-119 (ILEIALKYQFDSQQSFTRRFKYIF).

The protein is Transposon Tn10 TetD protein (tetD) of Escherichia coli.